A 195-amino-acid chain; its full sequence is Adenylate kinase (195 aa).

10–15 contacts ATP; sequence GSGKGT. Residues 30–59 are NMP; that stretch reads STGDILRAERAAGTLLGQQAQSYMDRGELV. AMP is bound by residues threonine 31, arginine 36, 57–59, 85–88, and glutamine 92; these read ELV and GFPR. The interval 126–140 is LID; that stretch reads NRAKQAVNGQQRSDD. Position 127 (arginine 127) interacts with ATP. AMP is bound by residues arginine 137 and arginine 148. Arginine 176 provides a ligand contact to ATP.

It belongs to the adenylate kinase family. As to quaternary structure, monomer.

It localises to the cytoplasm. It catalyses the reaction AMP + ATP = 2 ADP. It functions in the pathway purine metabolism; AMP biosynthesis via salvage pathway; AMP from ADP: step 1/1. In terms of biological role, catalyzes the reversible transfer of the terminal phosphate group between ATP and AMP. Plays an important role in cellular energy homeostasis and in adenine nucleotide metabolism. This Thermosynechococcus vestitus (strain NIES-2133 / IAM M-273 / BP-1) protein is Adenylate kinase.